The following is a 341-amino-acid chain: Dimethylsulfoniopropionate lyase 7 (341 aa).

Basic and acidic residues-rich tracts occupy residues 1 to 10 (MAGKDRKTIE) and 319 to 328 (ERKLAKDRQK). Disordered stretches follow at residues 1–24 (MAGKDRKTIEKNYPGAEVDEGGRF) and 319–341 (ERKLAKDRQKPKPATGTGTAFDA).

It belongs to the aspartate/glutamate racemases family. ALMA1 subfamily. Homotetramer.

The catalysed reaction is S,S-dimethyl-beta-propiothetin = acrylate + dimethyl sulfide + H(+). Functionally, mediates cleavage of dimethylsulfoniopropionate (DMSP) into dimethyl sulfide (DMS) and acrylate. DMS is the principal form by which sulfur is transported from oceans to the atmosphere and is a key component of the ocean sulfur cycle. The sequence is that of Dimethylsulfoniopropionate lyase 7 from Emiliania huxleyi (strain CCMP1516).